The following is a 762-amino-acid chain: Alpha-1,3-mannosyltransferase MNN1 (762 aa).

Residues M1–S16 lie on the Cytoplasmic side of the membrane. The helical; Signal-anchor for type II membrane protein transmembrane segment at C17–F33 threads the bilayer. Topologically, residues Q34–S762 are lumenal. N-linked (GlcNAc...) asparagine glycosylation is found at N50, N225, N254, and N383.

It belongs to the MNN1/MNT family.

Its subcellular location is the golgi apparatus membrane. It functions in the pathway protein modification; protein glycosylation. Responsible for addition of the terminal mannose residues to the outer chain of core N-linked polysaccharides and to O-linked mannotriose. Implicated in late Golgi modifications. This chain is Alpha-1,3-mannosyltransferase MNN1 (MNN1), found in Saccharomyces cerevisiae (strain ATCC 204508 / S288c) (Baker's yeast).